Reading from the N-terminus, the 80-residue chain is Defensin-like protein 291 (80 aa).

Positions 1–29 (MAASKTTIFIVFVLCLSCTLLVNISGIQA) are cleaved as a signal peptide. 3 disulfide bridges follow: cysteine 50/cysteine 70, cysteine 56/cysteine 75, and cysteine 62/cysteine 77.

It belongs to the DEFL family.

The protein localises to the secreted. The polypeptide is Defensin-like protein 291 (Arabidopsis thaliana (Mouse-ear cress)).